Here is a 469-residue protein sequence, read N- to C-terminus: 3-isopropylmalate dehydratase large subunit (469 aa).

[4Fe-4S] cluster is bound by residues Cys-350, Cys-410, and Cys-413.

This sequence belongs to the aconitase/IPM isomerase family. LeuC type 1 subfamily. Heterodimer of LeuC and LeuD. Requires [4Fe-4S] cluster as cofactor.

It carries out the reaction (2R,3S)-3-isopropylmalate = (2S)-2-isopropylmalate. It functions in the pathway amino-acid biosynthesis; L-leucine biosynthesis; L-leucine from 3-methyl-2-oxobutanoate: step 2/4. Catalyzes the isomerization between 2-isopropylmalate and 3-isopropylmalate, via the formation of 2-isopropylmaleate. The sequence is that of 3-isopropylmalate dehydratase large subunit from Rhizobium meliloti (strain 1021) (Ensifer meliloti).